Here is a 310-residue protein sequence, read N- to C-terminus: Light-independent protochlorophyllide reductase iron-sulfur ATP-binding protein (310 aa).

ATP contacts are provided by residues 53–58 (GIGKST) and Lys82. Mg(2+) is bound at residue Ser57. Cys138 and Cys172 together coordinate [4Fe-4S] cluster. Residues 223–224 (NR) and 247–249 (PAL) contribute to the ATP site.

The protein belongs to the NifH/BchL/ChlL family. Homodimer. Protochlorophyllide reductase is composed of three subunits; BchL, BchN and BchB. [4Fe-4S] cluster is required as a cofactor.

It catalyses the reaction chlorophyllide a + oxidized 2[4Fe-4S]-[ferredoxin] + 2 ADP + 2 phosphate = protochlorophyllide a + reduced 2[4Fe-4S]-[ferredoxin] + 2 ATP + 2 H2O. It participates in porphyrin-containing compound metabolism; bacteriochlorophyll biosynthesis (light-independent). Functionally, component of the dark-operative protochlorophyllide reductase (DPOR) that uses Mg-ATP and reduced ferredoxin to reduce ring D of protochlorophyllide (Pchlide) to form chlorophyllide a (Chlide). This reaction is light-independent. The L component serves as a unique electron donor to the NB-component of the complex, and binds Mg-ATP. The polypeptide is Light-independent protochlorophyllide reductase iron-sulfur ATP-binding protein (Rhodopseudomonas palustris (strain BisA53)).